We begin with the raw amino-acid sequence, 157 residues long: 6,7-dimethyl-8-ribityllumazine synthase 1 (157 aa).

5-amino-6-(D-ribitylamino)uracil contacts are provided by residues phenylalanine 22, 53 to 55 (ALE), and 82 to 84 (TVI). (2S)-2-hydroxy-3-oxobutyl phosphate is bound at residue 87–88 (ET). Catalysis depends on histidine 90, which acts as the Proton donor. Position 115 (asparagine 115) interacts with 5-amino-6-(D-ribitylamino)uracil. A (2S)-2-hydroxy-3-oxobutyl phosphate-binding site is contributed by arginine 129.

This sequence belongs to the DMRL synthase family.

The enzyme catalyses (2S)-2-hydroxy-3-oxobutyl phosphate + 5-amino-6-(D-ribitylamino)uracil = 6,7-dimethyl-8-(1-D-ribityl)lumazine + phosphate + 2 H2O + H(+). The protein operates within cofactor biosynthesis; riboflavin biosynthesis; riboflavin from 2-hydroxy-3-oxobutyl phosphate and 5-amino-6-(D-ribitylamino)uracil: step 1/2. Catalyzes the formation of 6,7-dimethyl-8-ribityllumazine by condensation of 5-amino-6-(D-ribitylamino)uracil with 3,4-dihydroxy-2-butanone 4-phosphate. This is the penultimate step in the biosynthesis of riboflavin. The chain is 6,7-dimethyl-8-ribityllumazine synthase 1 from Brucella suis biovar 1 (strain 1330).